The primary structure comprises 146 residues: Prefoldin subunit alpha 1 (146 aa).

The protein belongs to the prefoldin subunit alpha family. As to quaternary structure, heterohexamer of two alpha and four beta subunits.

It is found in the cytoplasm. Molecular chaperone capable of stabilizing a range of proteins. Seems to fulfill an ATP-independent, HSP70-like function in archaeal de novo protein folding. In Thermococcus kodakarensis (strain ATCC BAA-918 / JCM 12380 / KOD1) (Pyrococcus kodakaraensis (strain KOD1)), this protein is Prefoldin subunit alpha 1.